A 434-amino-acid polypeptide reads, in one-letter code: Indole diterpene prenyltransferase nodD2 (434 aa).

Residues 85-86 (LI) and Glu94 each bind L-tryptophan. Positions 107, 194, 268, 270, 272, 351, 353, 418, and 422 each coordinate substrate.

The protein belongs to the tryptophan dimethylallyltransferase family.

Its pathway is secondary metabolite biosynthesis. Indole diterpene prenyltransferase; part of the gene cluster that mediates the biosynthesis of the indole diterpenes nodulisporic acids (NA). Nodulisporic acid A (NAA) and its chemically modified derivatives are of particular significance because of their highly potent insecticidal activity against blood-feeding arthropods and lack of observable adverse effects on mammals, in particular the tremogenicity associated with the paspaline-derived IDTs is not observed. The geranylgeranyl diphosphate (GGPP) synthase ggs1, localized outside of the cluster, is proposed to catalyze the first step in nodulisporic acid biosynthesis via conversion of farnesyl pyrophosphate and isopentyl pyrophosphate into geranylgeranyl pyrophosphate (GGPP). Condensation of indole-3-glycerol phosphate with GGPP by the prenyl transferase nodC then forms 3-geranylgeranylindole (3-GGI). Epoxidation by the FAD-dependent monooxygenase nodM leads to a single-epoxidized-GGI that is substrate of the terpene cyclase nodB for cyclization to yield emindole SB. The terminal methyl carbon, C28, of emindole SB is then oxidized by the cytochrome P450 monooxygenase nodW to produce nodulisporic acid F (NAF), the pentacyclic core of NAA. NAF is converted to nodulisporic acid E (NAE) via prenylation. This step is probably performed by one of the indole diterpene prenyltransferases nodD1 or nodD2. Several oxidation steps performed by the FAD-linked oxidoreductase nodO and one of the cytochrome P450 monooxygenase nodR, nodX or nodZ further convert NAE to nodulisporic acid D (NAD). NAD is substrate of cytochrome P450 monooxygenase nodJ to produce the precursor of nodulisporic acid C (NAC), converted to NAC by one of the indole diterpene prenyltransferases nodD1 or nodD2. The FAD-dependent monooxygenase nodY2 then oxidizes NAC to nodulisporic acid B (NAB). Finally NAB is converted to NAA by one of the cytochrome P450 monooxygenases nodR, nodX or nodZ. In Hypoxylon pulicicidum, this protein is Indole diterpene prenyltransferase nodD2.